The primary structure comprises 549 residues: Lipase 1 (549 aa).

A signal peptide spans 1-15 (MELALALSLIASVAA). The cysteines at positions 75 and 112 are disulfide-linked. Residue serine 224 is the Acyl-ester intermediate of the active site. The cysteines at positions 283 and 292 are disulfide-linked. Asparagine 329 carries an N-linked (GlcNAc...) asparagine glycan. Residue glutamate 356 is the Charge relay system of the active site. An N-linked (GlcNAc...) asparagine glycan is attached at asparagine 366. Histidine 464 serves as the catalytic Charge relay system.

It belongs to the type-B carboxylesterase/lipase family.

The enzyme catalyses a triacylglycerol + H2O = a diacylglycerol + a fatty acid + H(+). This Diutina rugosa (Yeast) protein is Lipase 1 (LIP1).